A 123-amino-acid polypeptide reads, in one-letter code: uncharacterized protein (123 aa).

Helical transmembrane passes span 53 to 73 (VWFL…FFFL) and 75 to 95 (VLWF…VFSH).

It localises to the membrane. This is an uncharacterized protein from Saccharomyces cerevisiae (strain ATCC 204508 / S288c) (Baker's yeast).